We begin with the raw amino-acid sequence, 390 residues long: Flap endonuclease 1-2 (390 aa).

Positions 1-108 (MGIHQLMQFL…GELARRKKLK (108 aa)) are N-domain. Residue D34 coordinates Mg(2+). R74 lines the DNA pocket. Residues D90, E162, E164, D183, and D185 each coordinate Mg(2+). The interval 126-254 (QALLQNQRTT…GTAYKLIKEY (129 aa)) is I-domain. E162 lines the DNA pocket. DNA is bound by residues G232 and D234. D234 is a Mg(2+) binding site. Positions 348–356 (FQSRLENFF) are interaction with PCNA. Residues 359-390 (TTKIIHPNNSKAKAKSNKKTEQPQKSGGKKKI) are disordered.

The protein belongs to the XPG/RAD2 endonuclease family. FEN1 subfamily. As to quaternary structure, interacts with PCNA. Three molecules of FEN1 bind to one PCNA trimer with each molecule binding to one PCNA monomer. PCNA stimulates the nuclease activity without altering cleavage specificity. Requires Mg(2+) as cofactor. Post-translationally, phosphorylated. Phosphorylation upon DNA damage induces relocalization to the nuclear plasma.

It localises to the nucleus. The protein resides in the nucleolus. Its subcellular location is the nucleoplasm. It is found in the mitochondrion. Its function is as follows. Structure-specific nuclease with 5'-flap endonuclease and 5'-3' exonuclease activities involved in DNA replication and repair. During DNA replication, cleaves the 5'-overhanging flap structure that is generated by displacement synthesis when DNA polymerase encounters the 5'-end of a downstream Okazaki fragment. It enters the flap from the 5'-end and then tracks to cleave the flap base, leaving a nick for ligation. Also involved in the long patch base excision repair (LP-BER) pathway, by cleaving within the apurinic/apyrimidinic (AP) site-terminated flap. Acts as a genome stabilization factor that prevents flaps from equilibrating into structures that lead to duplications and deletions. Also possesses 5'-3' exonuclease activity on nicked or gapped double-stranded DNA, and exhibits RNase H activity. Also involved in replication and repair of rDNA and in repairing mitochondrial DNA. This Paramecium tetraurelia protein is Flap endonuclease 1-2.